The primary structure comprises 486 residues: Phosphomethylpyrimidine synthase (486 aa).

Residues Asn-80, Met-109, Tyr-139, His-175, 195-197 (SRG), 236-239 (DSLR), and Glu-275 contribute to the substrate site. His-279 provides a ligand contact to Zn(2+). Tyr-329 is a binding site for substrate. His-370 contributes to the Zn(2+) binding site. Positions 450, 453, and 458 each coordinate [4Fe-4S] cluster.

It belongs to the ThiC family. Requires [4Fe-4S] cluster as cofactor.

It carries out the reaction 5-amino-1-(5-phospho-beta-D-ribosyl)imidazole + S-adenosyl-L-methionine = 4-amino-2-methyl-5-(phosphooxymethyl)pyrimidine + CO + 5'-deoxyadenosine + formate + L-methionine + 3 H(+). It functions in the pathway cofactor biosynthesis; thiamine diphosphate biosynthesis. Functionally, catalyzes the synthesis of the hydroxymethylpyrimidine phosphate (HMP-P) moiety of thiamine from aminoimidazole ribotide (AIR) in a radical S-adenosyl-L-methionine (SAM)-dependent reaction. In Trichodesmium erythraeum (strain IMS101), this protein is Phosphomethylpyrimidine synthase.